We begin with the raw amino-acid sequence, 474 residues long: Sporulation-specific protein 6 (474 aa).

One can recognise a BRCT domain in the interval 125-178; it reads RLAFPNFIFYFDNVDEEIKRRVTQKINNLGAKVATLFTFEVTHFITTRTTDPEM. The DBF4-type zinc-finger motif lies at 421–470; sequence IETKSGYCENCCERYKDLERHLGGKHHRRFAEKDENFQGLDDLFLLIRRP. The Zn(2+) site is built by C428, C431, H441, and H447.

It is found in the nucleus. Its function is as follows. May act as a kinase regulator. Essential for progression of meiosis II and sporulation. The sequence is that of Sporulation-specific protein 6 (spo6) from Schizosaccharomyces pombe (strain 972 / ATCC 24843) (Fission yeast).